A 533-amino-acid chain; its full sequence is uncharacterized protein (533 aa).

4 stretches are compositionally biased toward polar residues: residues 30–43, 79–91, 231–247, and 254–263; these read SQQGQISESVVKNH, NAGTQSQNFTHLS, NVKSPVQQHRSFVSSSA, and GRQSNSPNSN. Disordered regions lie at residues 30 to 92 and 221 to 274; these read SQQG…HLSA and SLSP…PGAS. Position 336 is a phosphoserine (S336). The disordered stretch occupies residues 475 to 510; that stretch reads HPSLSNSAASPPVSSPGLRRSHIPVHEGLKHTRDGV. Over residues 476–490 the composition is skewed to low complexity; it reads PSLSNSAASPPVSSP. Positions 498–510 are enriched in basic and acidic residues; that stretch reads PVHEGLKHTRDGV.

It localises to the nucleus. This is an uncharacterized protein from Schizosaccharomyces pombe (strain 972 / ATCC 24843) (Fission yeast).